The following is a 191-amino-acid chain: Ureidoglycolate lyase (191 aa).

The protein belongs to the ureidoglycolate lyase family. In terms of assembly, homodimer.

It catalyses the reaction (S)-ureidoglycolate = urea + glyoxylate. It participates in nitrogen metabolism; (S)-allantoin degradation. Catalyzes the catabolism of the allantoin degradation intermediate (S)-ureidoglycolate, generating urea and glyoxylate. Involved in the utilization of allantoin as secondary nitrogen source when primary sources are limiting. The chain is Ureidoglycolate lyase from Schizosaccharomyces pombe (strain 972 / ATCC 24843) (Fission yeast).